We begin with the raw amino-acid sequence, 327 residues long: Beta-ketoacyl-[acyl-carrier-protein] synthase III (327 aa).

Catalysis depends on residues cysteine 114 and histidine 254. The tract at residues 255 to 259 (QANQR) is ACP-binding. Asparagine 284 is a catalytic residue.

This sequence belongs to the thiolase-like superfamily. FabH family. In terms of assembly, homodimer.

The protein localises to the cytoplasm. The enzyme catalyses malonyl-[ACP] + acetyl-CoA + H(+) = 3-oxobutanoyl-[ACP] + CO2 + CoA. It functions in the pathway lipid metabolism; fatty acid biosynthesis. Functionally, catalyzes the condensation reaction of fatty acid synthesis by the addition to an acyl acceptor of two carbons from malonyl-ACP. Catalyzes the first condensation reaction which initiates fatty acid synthesis and may therefore play a role in governing the total rate of fatty acid production. Possesses both acetoacetyl-ACP synthase and acetyl transacylase activities. Its substrate specificity determines the biosynthesis of branched-chain and/or straight-chain of fatty acids. The chain is Beta-ketoacyl-[acyl-carrier-protein] synthase III from Levilactobacillus brevis (strain ATCC 367 / BCRC 12310 / CIP 105137 / JCM 1170 / LMG 11437 / NCIMB 947 / NCTC 947) (Lactobacillus brevis).